Consider the following 37-residue polypeptide: uncharacterized protein (37 aa).

This is an uncharacterized protein from Archaeoglobus fulgidus (strain ATCC 49558 / DSM 4304 / JCM 9628 / NBRC 100126 / VC-16).